Here is a 317-residue protein sequence, read N- to C-terminus: Beta-ketoacyl-[acyl-carrier-protein] synthase III (317 aa).

Residues C112 and H244 contribute to the active site. Residues Q245–R249 are ACP-binding. Residue N274 is part of the active site.

The protein belongs to the thiolase-like superfamily. FabH family. In terms of assembly, homodimer.

The protein resides in the cytoplasm. The catalysed reaction is malonyl-[ACP] + acetyl-CoA + H(+) = 3-oxobutanoyl-[ACP] + CO2 + CoA. It functions in the pathway lipid metabolism; fatty acid biosynthesis. Its function is as follows. Catalyzes the condensation reaction of fatty acid synthesis by the addition to an acyl acceptor of two carbons from malonyl-ACP. Catalyzes the first condensation reaction which initiates fatty acid synthesis and may therefore play a role in governing the total rate of fatty acid production. Possesses both acetoacetyl-ACP synthase and acetyl transacylase activities. Its substrate specificity determines the biosynthesis of branched-chain and/or straight-chain of fatty acids. This is Beta-ketoacyl-[acyl-carrier-protein] synthase III from Rickettsia canadensis (strain McKiel).